Reading from the N-terminus, the 311-residue chain is Aspartate carbamoyltransferase catalytic subunit (311 aa).

Arg55 and Thr56 together coordinate carbamoyl phosphate. Lys85 contributes to the L-aspartate binding site. Residues Arg106, His135, and Gln138 each contribute to the carbamoyl phosphate site. Arg168 and Arg230 together coordinate L-aspartate. The carbamoyl phosphate site is built by Leu268 and Pro269.

It belongs to the aspartate/ornithine carbamoyltransferase superfamily. ATCase family. In terms of assembly, heterododecamer (2C3:3R2) of six catalytic PyrB chains organized as two trimers (C3), and six regulatory PyrI chains organized as three dimers (R2).

The catalysed reaction is carbamoyl phosphate + L-aspartate = N-carbamoyl-L-aspartate + phosphate + H(+). Its pathway is pyrimidine metabolism; UMP biosynthesis via de novo pathway; (S)-dihydroorotate from bicarbonate: step 2/3. Catalyzes the condensation of carbamoyl phosphate and aspartate to form carbamoyl aspartate and inorganic phosphate, the committed step in the de novo pyrimidine nucleotide biosynthesis pathway. This chain is Aspartate carbamoyltransferase catalytic subunit, found in Salmonella dublin (strain CT_02021853).